The sequence spans 501 residues: Aspartyl/glutamyl-tRNA(Asn/Gln) amidotransferase subunit B (501 aa).

The segment at 276–299 is disordered; it reads HYQEADGSTSKGRPKETAEDYRYF. The span at 288–299 shows a compositional bias: basic and acidic residues; the sequence is RPKETAEDYRYF.

This sequence belongs to the GatB/GatE family. GatB subfamily. In terms of assembly, heterotrimer of A, B and C subunits.

It catalyses the reaction L-glutamyl-tRNA(Gln) + L-glutamine + ATP + H2O = L-glutaminyl-tRNA(Gln) + L-glutamate + ADP + phosphate + H(+). The enzyme catalyses L-aspartyl-tRNA(Asn) + L-glutamine + ATP + H2O = L-asparaginyl-tRNA(Asn) + L-glutamate + ADP + phosphate + 2 H(+). Its function is as follows. Allows the formation of correctly charged Asn-tRNA(Asn) or Gln-tRNA(Gln) through the transamidation of misacylated Asp-tRNA(Asn) or Glu-tRNA(Gln) in organisms which lack either or both of asparaginyl-tRNA or glutaminyl-tRNA synthetases. The reaction takes place in the presence of glutamine and ATP through an activated phospho-Asp-tRNA(Asn) or phospho-Glu-tRNA(Gln). The chain is Aspartyl/glutamyl-tRNA(Asn/Gln) amidotransferase subunit B from Corynebacterium glutamicum (strain R).